The following is a 1386-amino-acid chain: Pleckstrin homology domain-containing family G member 2 (1386 aa).

2 disordered regions span residues 1–21 (MPEGAQGLSLSKPSPSLGCGR) and 36–82 (TAPA…PLPG). Low complexity-rich tracts occupy residues 8-17 (LSLSKPSPSL) and 45-62 (SPRGSGSSTSLSTVGSEG). A Phosphoserine modification is found at serine 90. The DH domain maps to 102-283 (RLERVAREIV…TAVAWYINDM (182 aa)). In terms of domain architecture, PH spans 313 to 411 (ELVLEGAFRG…WIHCLQRLFF (99 aa)). Disordered stretches follow at residues 436-540 (KSKP…PSGT), 554-612 (GLRD…PSPL), 701-739 (EPAEAPATRRELFSGSNPGKLGEPPSGGKAGPEEDEEGV), 790-815 (ILEDSDLGGDSGSGKAGAPSSERTAS), and 829-859 (QQMQRAETRASANAPRRRPRVLAQPQPSPCL). A Phosphothreonine modification is found at threonine 445. Serine 450 and serine 469 each carry phosphoserine. Residues 592–603 (SEEEEEEEEGLE) show a composition bias toward acidic residues. 2 positions are modified to phosphoserine: serine 911 and serine 1049. 2 disordered regions span residues 1037-1099 (PVPK…PLPC) and 1162-1191 (TSPKQGSLPDIQGPAAAPPLPEPSLTDTQV). 2 stretches are compositionally biased toward polar residues: residues 1048–1059 (ESPTNIPLTKQG) and 1073–1086 (QPIQPLSWHGSSLD). Phosphothreonine is present on threonine 1257. Residues serine 1261 and serine 1310 each carry the phosphoserine modification. Disordered regions lie at residues 1291-1333 (ARRQ…ARRL) and 1367-1386 (TQESMGLHRAQGAPDAPFHM). The span at 1301–1317 (PAASRGSWSSAPTSRAS) shows a compositional bias: low complexity. Over residues 1318–1330 (SPPPQPQPPPPPA) the composition is skewed to pro residues.

In terms of biological role, may be a transforming oncogene with exchange activity for CDC42. May be a guanine-nucleotide exchange factor (GEF) for RAC1 and CDC42. Activated by the binding to subunits beta and gamma of the heterotrimeric guanine nucleotide-binding protein (G protein). Involved in the regulation of actin polymerization. In Homo sapiens (Human), this protein is Pleckstrin homology domain-containing family G member 2 (PLEKHG2).